The chain runs to 354 residues: Uroporphyrinogen decarboxylase (354 aa).

Residues 27 to 31 (RQAGR), Asp-77, Tyr-154, Thr-209, and His-327 contribute to the substrate site.

Belongs to the uroporphyrinogen decarboxylase family. As to quaternary structure, homodimer.

The protein resides in the cytoplasm. The enzyme catalyses uroporphyrinogen III + 4 H(+) = coproporphyrinogen III + 4 CO2. Its pathway is porphyrin-containing compound metabolism; protoporphyrin-IX biosynthesis; coproporphyrinogen-III from 5-aminolevulinate: step 4/4. Catalyzes the decarboxylation of four acetate groups of uroporphyrinogen-III to yield coproporphyrinogen-III. This chain is Uroporphyrinogen decarboxylase, found in Pseudomonas putida (strain GB-1).